A 154-amino-acid polypeptide reads, in one-letter code: 6,7-dimethyl-8-ribityllumazine synthase (154 aa).

5-amino-6-(D-ribitylamino)uracil is bound by residues Phe-22, 56-58, and 80-82; these read SFE and AVI. A (2S)-2-hydroxy-3-oxobutyl phosphate-binding site is contributed by 85 to 86; the sequence is ST. His-88 acts as the Proton donor in catalysis. Tyr-113 is a 5-amino-6-(D-ribitylamino)uracil binding site. Arg-127 provides a ligand contact to (2S)-2-hydroxy-3-oxobutyl phosphate.

This sequence belongs to the DMRL synthase family. In terms of assembly, forms an icosahedral capsid composed of 60 subunits, arranged as a dodecamer of pentamers.

The enzyme catalyses (2S)-2-hydroxy-3-oxobutyl phosphate + 5-amino-6-(D-ribitylamino)uracil = 6,7-dimethyl-8-(1-D-ribityl)lumazine + phosphate + 2 H2O + H(+). The protein operates within cofactor biosynthesis; riboflavin biosynthesis; riboflavin from 2-hydroxy-3-oxobutyl phosphate and 5-amino-6-(D-ribitylamino)uracil: step 1/2. Its function is as follows. Catalyzes the formation of 6,7-dimethyl-8-ribityllumazine by condensation of 5-amino-6-(D-ribitylamino)uracil with 3,4-dihydroxy-2-butanone 4-phosphate. This is the penultimate step in the biosynthesis of riboflavin. The polypeptide is 6,7-dimethyl-8-ribityllumazine synthase (Persephonella marina (strain DSM 14350 / EX-H1)).